The primary structure comprises 98 residues: NADH-ubiquinone oxidoreductase chain 4L (98 aa).

The next 3 membrane-spanning stretches (helical) occupy residues 1–21 (MSPL…GLAF), 26–46 (LISA…PLSI), and 56–76 (FALV…TGLA).

Belongs to the complex I subunit 4L family. In terms of assembly, core subunit of respiratory chain NADH dehydrogenase (Complex I) which is composed of 45 different subunits.

It localises to the mitochondrion inner membrane. The enzyme catalyses a ubiquinone + NADH + 5 H(+)(in) = a ubiquinol + NAD(+) + 4 H(+)(out). Its function is as follows. Core subunit of the mitochondrial membrane respiratory chain NADH dehydrogenase (Complex I) which catalyzes electron transfer from NADH through the respiratory chain, using ubiquinone as an electron acceptor. Part of the enzyme membrane arm which is embedded in the lipid bilayer and involved in proton translocation. The polypeptide is NADH-ubiquinone oxidoreductase chain 4L (MT-ND4L) (Gallus gallus (Chicken)).